Reading from the N-terminus, the 156-residue chain is MQKIAGKAAASPKKGGAPNLLCVWASAEKPPPELARVTELHSLMPWGSLLRGMLGSDTEMRPGLAELCVPGAEFLITLNLHAWRPPVPEVGDHPEPTPESAMELLAPYYAAAGWTLEEARYFGAEELDALATSWTRRLGSTRDELDVLGITGVIGK.

Functionally, modifies 16S rRNA so making ribosomes resistant to certain aminoglycosides. This is rRNA methyltransferase (kamC) from Saccharopolyspora hirsuta.